We begin with the raw amino-acid sequence, 37 residues long: Fructose-bisphosphate aldolase A (37 aa).

Belongs to the class I fructose-bisphosphate aldolase family. As to quaternary structure, tetramer.

It carries out the reaction beta-D-fructose 1,6-bisphosphate = D-glyceraldehyde 3-phosphate + dihydroxyacetone phosphate. The protein operates within carbohydrate degradation; glycolysis; D-glyceraldehyde 3-phosphate and glycerone phosphate from D-glucose: step 4/4. Its function is as follows. Plays a key role in glycolysis and gluconeogenesis. This chain is Fructose-bisphosphate aldolase A, found in Thunnus albacares (Yellowfin tuna).